The primary structure comprises 626 residues: Phosphomethylpyrimidine synthase (626 aa).

The disordered stretch occupies residues 1-22; that stretch reads MTKQEKAINLSESAQVDQQSVQ. Positions 10–22 are enriched in polar residues; that stretch reads LSESAQVDQQSVQ. Substrate-binding positions include Asn232, Met261, Tyr290, His326, 346–348, 387–390, and Glu426; these read SRG and DGLR. His430 contributes to the Zn(2+) binding site. Tyr453 contacts substrate. His494 is a Zn(2+) binding site. Positions 574, 577, and 582 each coordinate [4Fe-4S] cluster.

This sequence belongs to the ThiC family. As to quaternary structure, homodimer. Requires [4Fe-4S] cluster as cofactor.

The enzyme catalyses 5-amino-1-(5-phospho-beta-D-ribosyl)imidazole + S-adenosyl-L-methionine = 4-amino-2-methyl-5-(phosphooxymethyl)pyrimidine + CO + 5'-deoxyadenosine + formate + L-methionine + 3 H(+). It functions in the pathway cofactor biosynthesis; thiamine diphosphate biosynthesis. Its function is as follows. Catalyzes the synthesis of the hydroxymethylpyrimidine phosphate (HMP-P) moiety of thiamine from aminoimidazole ribotide (AIR) in a radical S-adenosyl-L-methionine (SAM)-dependent reaction. This is Phosphomethylpyrimidine synthase from Pseudomonas putida (strain ATCC 700007 / DSM 6899 / JCM 31910 / BCRC 17059 / LMG 24140 / F1).